Here is a 361-residue protein sequence, read N- to C-terminus: Probable lipid desaturase ADS3.2, chloroplastic (361 aa).

Residues 1–57 constitute a chloroplast transit peptide; sequence MMSLSTTLKPLSHFSPFVKRHNPKTNNTLFTLDTHNFTNSFWSKRGGSVSHRKHTVV. The next 2 helical transmembrane spans lie at 99–118 and 122–139; these read LVIF…YFSW and WVFP…TLSY. A Histidine box-1 motif is present at residues 140 to 145; it reads HRNLSH. The Histidine box-2 signature appears at 177-181; the sequence is HRYHH. A helical transmembrane segment spans residues 246-266; sequence FLFYFCGGMPLLVWGIGITIA. Residues 309–313 carry the Histidine box-3 motif; that stretch reads HNNHH.

Belongs to the fatty acid desaturase type 1 family. Requires Fe(2+) as cofactor.

The protein localises to the plastid. Its subcellular location is the chloroplast membrane. It participates in lipid metabolism; polyunsaturated fatty acid biosynthesis. This is Probable lipid desaturase ADS3.2, chloroplastic from Arabidopsis thaliana (Mouse-ear cress).